Here is a 576-residue protein sequence, read N- to C-terminus: Low-affinity glucose transporter HXT4 (576 aa).

The tract at residues Met-1–Asn-56 is disordered. The Cytoplasmic segment spans residues Met-1–Ser-66. A compositionally biased stretch (polar residues) spans Glu-25–Asn-37. Over residues Lys-38–Ser-54 the composition is skewed to basic and acidic residues. Lys-45 is covalently cross-linked (Glycyl lysine isopeptide (Lys-Gly) (interchain with G-Cter in ubiquitin)). The helical transmembrane segment at Ala-67–Trp-87 threads the bilayer. At Asp-88–Gly-122 the chain is on the extracellular side. The chain crosses the membrane as a helical span at residues Leu-123 to Gly-143. Topologically, residues Asp-144–Lys-149 are cytoplasmic. Residues Met-150 to Ile-170 traverse the membrane as a helical segment. Over Asn-171 to Arg-180 the chain is Extracellular. The helical transmembrane segment at Ile-181–Val-201 threads the bilayer. Over Ser-202–Arg-207 the chain is Cytoplasmic. The chain crosses the membrane as a helical span at residues Gly-208–Thr-228. Over Asn-229–Arg-242 the chain is Extracellular. A helical membrane pass occupies residues Val-243 to Pro-263. The Cytoplasmic portion of the chain corresponds to Glu-264–Asp-346. Residues Asn-347–Glu-363 traverse the membrane as a helical segment. At Asp-364–Ser-369 the chain is on the extracellular side. A helical membrane pass occupies residues Ile-370–Val-387. At Glu-388–Arg-394 the chain is on the cytoplasmic side. Residues Cys-395–Val-415 traverse the membrane as a helical segment. Over Thr-416–Val-437 the chain is Extracellular. Asn-425 is a glycosylation site (N-linked (GlcNAc...) asparagine). A helical transmembrane segment spans residues Phe-438 to Asn-458. Over Ser-459 to Gln-475 the chain is Cytoplasmic. Residues Ala-476–Ile-496 form a helical membrane-spanning segment. Position 497 (Asp-497) is a topological domain, extracellular. The helical transmembrane segment at Phe-498–Phe-518 threads the bilayer. Residues Val-519 to Lys-576 are Cytoplasmic-facing.

It belongs to the major facilitator superfamily. Sugar transporter (TC 2.A.1.1) family.

The protein resides in the cell membrane. Xylose uptake is strongly inhibited by glucose. Its function is as follows. Low-affinity glucose transporter. Can also transport xylose. In Saccharomyces cerevisiae (strain ATCC 204508 / S288c) (Baker's yeast), this protein is Low-affinity glucose transporter HXT4 (HXT4).